We begin with the raw amino-acid sequence, 213 residues long: Nicolin-1 (213 aa).

As to quaternary structure, part of the neuronal tubulin polyglutamylase complex which contains TPGS1, TPGS2, TTLL1, LRRC49 and NICN1. As to expression, high expression level is found in brain, testis, liver and kidney. Weak expression in spleen, leukocytes, small intestine and colon.

It is found in the nucleus. This chain is Nicolin-1 (NICN1), found in Homo sapiens (Human).